Reading from the N-terminus, the 807-residue chain is Glycerol-3-phosphate acyltransferase (807 aa).

The HXXXXD motif signature appears at 309 to 314 (CHRSHM).

This sequence belongs to the GPAT/DAPAT family.

The protein resides in the cell inner membrane. The enzyme catalyses sn-glycerol 3-phosphate + an acyl-CoA = a 1-acyl-sn-glycero-3-phosphate + CoA. It functions in the pathway phospholipid metabolism; CDP-diacylglycerol biosynthesis; CDP-diacylglycerol from sn-glycerol 3-phosphate: step 1/3. This Aeromonas hydrophila subsp. hydrophila (strain ATCC 7966 / DSM 30187 / BCRC 13018 / CCUG 14551 / JCM 1027 / KCTC 2358 / NCIMB 9240 / NCTC 8049) protein is Glycerol-3-phosphate acyltransferase.